The following is a 321-amino-acid chain: MSMPGINVSNLLNEHEELGLRLLAGQKGLTNRINMSEINRPGLSLTGFYESFAHDRIQIFGKGEWAYITSRTPEDLEKIAAEFFGFHLNCIIFTHGNMPPPIFMENCEKLGIPLMISEVSTHKFITLISGILDRSLAPRTMRHGVLIEVFGIGILLSGKSGVGKSETALELIERGHRLVADDMVEIRRLSESYLIGTCSDLLRHHMEIRGLGILNIKDIFGIGSVRDHKLIELIIHLEEWTEGKDFDRTGLENPTEELLGVQIPLIRVPVRPGRNIPIIVETAAMNQRLRKLGKNAAQEFNQKLSQYLQQGKVERNPTQNQ.

Catalysis depends on residues H143 and K164. Residue 158 to 165 (GKSGVGKS) participates in ATP binding. Residue S165 participates in Mg(2+) binding. Residue D182 is the Proton acceptor; for phosphorylation activity. Proton donor; for dephosphorylation activity of the active site. The segment at 206–215 (MEIRGLGILN) is important for the catalytic mechanism of both phosphorylation and dephosphorylation. Mg(2+) is bound at residue E207. Residue R248 is part of the active site. An important for the catalytic mechanism of dephosphorylation region spans residues 269–274 (PVRPGR).

The protein belongs to the HPrK/P family. In terms of assembly, homohexamer. Mg(2+) serves as cofactor.

The enzyme catalyses [HPr protein]-L-serine + ATP = [HPr protein]-O-phospho-L-serine + ADP + H(+). It carries out the reaction [HPr protein]-O-phospho-L-serine + phosphate + H(+) = [HPr protein]-L-serine + diphosphate. Functionally, catalyzes the ATP- as well as the pyrophosphate-dependent phosphorylation of a specific serine residue in HPr, a phosphocarrier protein of the phosphoenolpyruvate-dependent sugar phosphotransferase system (PTS). HprK/P also catalyzes the pyrophosphate-producing, inorganic phosphate-dependent dephosphorylation (phosphorolysis) of seryl-phosphorylated HPr (P-Ser-HPr). In Leptospira interrogans serogroup Icterohaemorrhagiae serovar copenhageni (strain Fiocruz L1-130), this protein is HPr kinase/phosphorylase.